The chain runs to 438 residues: 3-phosphoshikimate 1-carboxyvinyltransferase (438 aa).

Lys-26, Ser-27, and Arg-31 together coordinate 3-phosphoshikimate. Residue Lys-26 participates in phosphoenolpyruvate binding. Residues Gly-99 and Arg-127 each coordinate phosphoenolpyruvate. Positions 172, 174, 320, and 347 each coordinate 3-phosphoshikimate. Gln-174 contributes to the phosphoenolpyruvate binding site. The active-site Proton acceptor is the Asp-320. Residues Arg-351 and Arg-392 each contribute to the phosphoenolpyruvate site.

This sequence belongs to the EPSP synthase family. In terms of assembly, monomer.

It localises to the cytoplasm. It catalyses the reaction 3-phosphoshikimate + phosphoenolpyruvate = 5-O-(1-carboxyvinyl)-3-phosphoshikimate + phosphate. The protein operates within metabolic intermediate biosynthesis; chorismate biosynthesis; chorismate from D-erythrose 4-phosphate and phosphoenolpyruvate: step 6/7. Catalyzes the transfer of the enolpyruvyl moiety of phosphoenolpyruvate (PEP) to the 5-hydroxyl of shikimate-3-phosphate (S3P) to produce enolpyruvyl shikimate-3-phosphate and inorganic phosphate. The sequence is that of 3-phosphoshikimate 1-carboxyvinyltransferase from Xanthomonas campestris pv. campestris (strain B100).